A 147-amino-acid polypeptide reads, in one-letter code: Ribonuclease P protein component (147 aa).

Positions threonine 117–glutamine 147 are disordered.

Belongs to the RnpA family. As to quaternary structure, consists of a catalytic RNA component (M1 or rnpB) and a protein subunit.

It carries out the reaction Endonucleolytic cleavage of RNA, removing 5'-extranucleotides from tRNA precursor.. Its function is as follows. RNaseP catalyzes the removal of the 5'-leader sequence from pre-tRNA to produce the mature 5'-terminus. It can also cleave other RNA substrates such as 4.5S RNA. The protein component plays an auxiliary but essential role in vivo by binding to the 5'-leader sequence and broadening the substrate specificity of the ribozyme. This is Ribonuclease P protein component from Thermobifida fusca (strain YX).